Reading from the N-terminus, the 205-residue chain is High frequency lysogenization protein HflD homolog (205 aa).

The protein belongs to the HflD family.

The protein resides in the cytoplasm. The protein localises to the cell inner membrane. The protein is High frequency lysogenization protein HflD homolog of Shewanella oneidensis (strain ATCC 700550 / JCM 31522 / CIP 106686 / LMG 19005 / NCIMB 14063 / MR-1).